The sequence spans 186 residues: A-type ATP synthase subunit E (186 aa).

Belongs to the V-ATPase E subunit family. Has multiple subunits with at least A(3), B(3), C, D, E, F, H, I and proteolipid K(x).

Its subcellular location is the cell membrane. Its function is as follows. Component of the A-type ATP synthase that produces ATP from ADP in the presence of a proton gradient across the membrane. The sequence is that of A-type ATP synthase subunit E from Methanocella arvoryzae (strain DSM 22066 / NBRC 105507 / MRE50).